The sequence spans 285 residues: Pantothenate synthetase (285 aa).

30-37 lines the ATP pocket; sequence MGNLHDGH. His37 serves as the catalytic Proton donor. Gln61 contributes to the (R)-pantoate binding site. Residue Gln61 coordinates beta-alanine. 148 to 151 is an ATP binding site; sequence GEKD. Gln154 is a binding site for (R)-pantoate. 185-188 serves as a coordination point for ATP; that stretch reads RSSR.

The protein belongs to the pantothenate synthetase family. In terms of assembly, homodimer.

Its subcellular location is the cytoplasm. The catalysed reaction is (R)-pantoate + beta-alanine + ATP = (R)-pantothenate + AMP + diphosphate + H(+). Its pathway is cofactor biosynthesis; (R)-pantothenate biosynthesis; (R)-pantothenate from (R)-pantoate and beta-alanine: step 1/1. Functionally, catalyzes the condensation of pantoate with beta-alanine in an ATP-dependent reaction via a pantoyl-adenylate intermediate. The protein is Pantothenate synthetase of Alcanivorax borkumensis (strain ATCC 700651 / DSM 11573 / NCIMB 13689 / SK2).